The sequence spans 322 residues: Sideroflexin-2 (322 aa).

M1 carries the N-acetylmethionine modification. Helical transmembrane passes span 99 to 119 (GMLI…VIFW), 147 to 167 (ALSY…MNMW), 174 to 194 (LVGR…NIPM), 223 to 243 (VGIA…MILL), and 266 to 286 (LQVL…CGLF).

It belongs to the sideroflexin family. Expressed in brain, heart, kidney, spleen, thymus, liver, stomach and skin.

Its subcellular location is the mitochondrion inner membrane. The protein localises to the mitochondrion outer membrane. The catalysed reaction is L-serine(in) = L-serine(out). Functionally, mitochondrial amino-acid transporter that mediates transport of serine into mitochondria. Involved in mitochondrial iron homeostasis by regulating heme biosynthesis. In Mus musculus (Mouse), this protein is Sideroflexin-2.